Consider the following 464-residue polypeptide: Chromosomal replication initiator protein DnaA (464 aa).

Residues 1–82 form a domain I, interacts with DnaA modulators region; that stretch reads MSLSLWQQCL…LLRFEVGSKP (82 aa). The domain II stretch occupies residues 82-127; sequence PPQMAVLQPASQHASEAPSQAAVARPRPSRPSWDNAPVQPELSYRS. The interval 91–118 is disordered; that stretch reads ASQHASEAPSQAAVARPRPSRPSWDNAP. The domain III, AAA+ region stretch occupies residues 128 to 344; that stretch reads NVNPKHNFDN…GALNRVIANA (217 aa). ATP is bound by residues G172, G174, K175, and T176. Residues 345-464 form a domain IV, binds dsDNA region; sequence NFTGRAITID…FSNLIRTLSS (120 aa).

The protein belongs to the DnaA family. In terms of assembly, oligomerizes as a right-handed, spiral filament on DNA at oriC.

The protein resides in the cytoplasm. Functionally, plays an essential role in the initiation and regulation of chromosomal replication. ATP-DnaA binds to the origin of replication (oriC) to initiate formation of the DNA replication initiation complex once per cell cycle. Binds the DnaA box (a 9 base pair repeat at the origin) and separates the double-stranded (ds)DNA. Forms a right-handed helical filament on oriC DNA; dsDNA binds to the exterior of the filament while single-stranded (ss)DNA is stabiized in the filament's interior. The ATP-DnaA-oriC complex binds and stabilizes one strand of the AT-rich DNA unwinding element (DUE), permitting loading of DNA polymerase. After initiation quickly degrades to an ADP-DnaA complex that is not apt for DNA replication. Binds acidic phospholipids. In Sodalis glossinidius (strain morsitans), this protein is Chromosomal replication initiator protein DnaA.